The primary structure comprises 154 residues: 17.0 kDa class II heat shock protein (154 aa).

Residues 39–154 (DARAMAATPA…KPKTIEIKVA (116 aa)) form the sHSP domain.

It belongs to the small heat shock protein (HSP20) family.

It localises to the cytoplasm. This Zea mays (Maize) protein is 17.0 kDa class II heat shock protein (HSP18).